A 1070-amino-acid polypeptide reads, in one-letter code: DNA-directed RNA polymerase subunit beta (1070 aa).

This sequence belongs to the RNA polymerase beta chain family. In plastids the minimal PEP RNA polymerase catalytic core is composed of four subunits: alpha, beta, beta', and beta''. When a (nuclear-encoded) sigma factor is associated with the core the holoenzyme is formed, which can initiate transcription.

It localises to the plastid. Its subcellular location is the chloroplast. The enzyme catalyses RNA(n) + a ribonucleoside 5'-triphosphate = RNA(n+1) + diphosphate. Functionally, DNA-dependent RNA polymerase catalyzes the transcription of DNA into RNA using the four ribonucleoside triphosphates as substrates. The polypeptide is DNA-directed RNA polymerase subunit beta (Chloranthus spicatus (Chulantree)).